A 218-amino-acid polypeptide reads, in one-letter code: MSDIDHLQQIAHLRREYTKGGLRRRDLTETPLPLFERWLAQACDAKLADPTAMVVATVDEHGQPYQRIVLLKHFDERGMVFYTNLGSRKAHHLENNPRISLLFPWHMLERQVMVTGKAERLSTLEVVKYFHSRPRDSQIGAWVSKQSSRISARGVLESKFLELKQKFQQGEVPLPSFWGGFRVSLEQVEFWQGGEHRLHDRFLYQRDGDGWKIDRLAP.

Substrate-binding positions include 14-17 (RREY) and lysine 72. Residues 67–72 (RIVLLK), 82–83 (YT), arginine 88, lysine 89, and glutamine 111 contribute to the FMN site. Residues tyrosine 129, arginine 133, and serine 137 each contribute to the substrate site. FMN-binding positions include 146 to 147 (QS) and tryptophan 191. A substrate-binding site is contributed by 197-199 (RLH). Arginine 201 contacts FMN.

It belongs to the pyridoxamine 5'-phosphate oxidase family. Homodimer. FMN serves as cofactor.

It carries out the reaction pyridoxamine 5'-phosphate + O2 + H2O = pyridoxal 5'-phosphate + H2O2 + NH4(+). It catalyses the reaction pyridoxine 5'-phosphate + O2 = pyridoxal 5'-phosphate + H2O2. The protein operates within cofactor metabolism; pyridoxal 5'-phosphate salvage; pyridoxal 5'-phosphate from pyridoxamine 5'-phosphate: step 1/1. Its pathway is cofactor metabolism; pyridoxal 5'-phosphate salvage; pyridoxal 5'-phosphate from pyridoxine 5'-phosphate: step 1/1. In terms of biological role, catalyzes the oxidation of either pyridoxine 5'-phosphate (PNP) or pyridoxamine 5'-phosphate (PMP) into pyridoxal 5'-phosphate (PLP). In Cronobacter sakazakii (strain ATCC BAA-894) (Enterobacter sakazakii), this protein is Pyridoxine/pyridoxamine 5'-phosphate oxidase.